Reading from the N-terminus, the 326-residue chain is Interleukin-1-binding protein (326 aa).

The signal sequence occupies residues 1–18; that stretch reads MSILPVIFLSIFFYSSFV. 3 consecutive Ig-like domains span residues 24–115, 122–212, and 221–322; these read PECI…LNLT, SNID…RIVK, and PSTM…KTVT. A disulfide bond links Cys-48 and Cys-99. Residues Asn-80, Asn-103, and Asn-113 are each glycosylated (N-linked (GlcNAc...) asparagine; by host). Cysteines 143 and 194 form a disulfide. 2 N-linked (GlcNAc...) asparagine; by host glycosylation sites follow: Asn-206 and Asn-237. Cys-242 and Cys-309 are disulfide-bonded.

It belongs to the interleukin-1 receptor family. Interacts with mouse Il1b.

The protein resides in the secreted. May reduce the host inflammatory response by interacting with inteleukin-1 beta (Il1b) and thus decreasing the association between IL1B and its cellular receptor. This Vaccinia virus (strain Ankara) (VACV) protein is Interleukin-1-binding protein (OPG201).